The sequence spans 420 residues: UDP-N-acetylglucosamine 1-carboxyvinyltransferase 2 (420 aa).

Position 22-23 (22-23) interacts with phosphoenolpyruvate; the sequence is KN. Arginine 92 serves as a coordination point for UDP-N-acetyl-alpha-D-glucosamine. The active-site Proton donor is the cysteine 116. Cysteine 116 is subject to 2-(S-cysteinyl)pyruvic acid O-phosphothioketal. UDP-N-acetyl-alpha-D-glucosamine is bound by residues 121–125, aspartate 307, and isoleucine 329; that span reads RPIDL.

This sequence belongs to the EPSP synthase family. MurA subfamily.

It localises to the cytoplasm. It catalyses the reaction phosphoenolpyruvate + UDP-N-acetyl-alpha-D-glucosamine = UDP-N-acetyl-3-O-(1-carboxyvinyl)-alpha-D-glucosamine + phosphate. It functions in the pathway cell wall biogenesis; peptidoglycan biosynthesis. In terms of biological role, cell wall formation. Adds enolpyruvyl to UDP-N-acetylglucosamine. The polypeptide is UDP-N-acetylglucosamine 1-carboxyvinyltransferase 2 (Streptococcus thermophilus (strain ATCC BAA-250 / LMG 18311)).